A 1046-amino-acid polypeptide reads, in one-letter code: Phospholipase D zeta 2 (1046 aa).

The region spanning 45 to 205 (PKAAIVSVSR…KEVCKFLEVS (161 aa)) is the PX domain. A PH domain is found at 215 to 343 (SKMKEGYVTV…WVKAVDEAGC (129 aa)). The 28-residue stretch at 472 to 499 (YLWSHHEKIVIVDYQVCFIGGLDLCFGR) folds into the PLD phosphodiesterase 1 domain. Residues histidine 477, lysine 479, and aspartate 484 contribute to the active site. Residues 653 to 667 (GRGDLKLDSGARQDP) are compositionally biased toward basic and acidic residues. The segment at 653-677 (GRGDLKLDSGARQDPGETSEESDLD) is disordered. The region spanning 847–874 (SQIYVHSKLMIVDDRIAVIGSSNINDRS) is the PLD phosphodiesterase 2 domain. Active-site residues include histidine 852, lysine 854, and aspartate 859.

Belongs to the phospholipase D family. PXPH-PLD subfamily. Requires Does not require Ca(2+) or any other cation for activity. as cofactor. As to expression, expressed in seedlings, roots, leaves, stems and flowers. Highest expression in roots. Detected only in the meristematic regions up to 4 days after germination and then at later stages in all tissues.

The enzyme catalyses a 1,2-diacyl-sn-glycero-3-phosphocholine + H2O = a 1,2-diacyl-sn-glycero-3-phosphate + choline + H(+). Hydrolyzes glycerol-phospholipids at the terminal phosphodiesteric bond to generate phosphatidic acids (PA). Phosphatidylcholine-selective. Regulates vesicle trafficking and auxin responses. Required for the normal cycling of PIN-2 containing vesicles. Contributes to the supply of inorganic phosphorus for cell metabolism and diacylglycerol moieties for galactolipid synthesis in phosphorus-starved roots. Involved in root elongation during phosphate limitation. The sequence is that of Phospholipase D zeta 2 from Arabidopsis thaliana (Mouse-ear cress).